A 208-amino-acid polypeptide reads, in one-letter code: Octanoyltransferase (208 aa).

Residues 31–208 form the BPL/LPL catalytic domain; it reads GSEREMVWLL…LKKEFYKVFA (178 aa). Residues 70–77, 142–144, and 155–157 each bind substrate; these read RGGKYSYH, AFG, and GVA. The active-site Acyl-thioester intermediate is the cysteine 173.

It belongs to the LipB family.

It is found in the cytoplasm. The catalysed reaction is octanoyl-[ACP] + L-lysyl-[protein] = N(6)-octanoyl-L-lysyl-[protein] + holo-[ACP] + H(+). The protein operates within protein modification; protein lipoylation via endogenous pathway; protein N(6)-(lipoyl)lysine from octanoyl-[acyl-carrier-protein]: step 1/2. Functionally, catalyzes the transfer of endogenously produced octanoic acid from octanoyl-acyl-carrier-protein onto the lipoyl domains of lipoate-dependent enzymes. Lipoyl-ACP can also act as a substrate although octanoyl-ACP is likely to be the physiological substrate. This is Octanoyltransferase from Anaplasma phagocytophilum (strain HZ).